Here is a 432-residue protein sequence, read N- to C-terminus: CLOCK-interacting pacemaker (432 aa).

2 disordered regions span residues 71-98 (ADSDKDSGFSDGSSECLSSAEQMESEDM) and 194-315 (SYTK…SSPL). At serine 246 the chain carries Phosphoserine. The span at 272-283 (SPQTLQPVSSSH) shows a compositional bias: polar residues. Residues 364 to 395 (EITLKTKELIRQNQATQAELDQLKEQTQMFIE) are a coiled coil. The interval 408 to 432 (LQASLTSGSSHSGSDLDTLSDHPDV) is disordered. The span at 411–424 (SLTSGSSHSGSDLD) shows a compositional bias: low complexity.

In terms of assembly, interacts with CLOCK. Forms a ternary complex with the CLOCK-BMAL1 heterodimer. Interacts with CAD and HSPA5. Expressed in the heart, kidney and liver and shows a circadian oscillation in these tissues with a peak at circadian time 14 hours (at protein level). Expressed in the brain, including the suprachiasmatic nucleus (SCN) of the brain, and in multiple peripheral tissues such as heart, liver and kidney. Exhibits a circadian oscillation in the peripheral tissues with a peak at circadian time 14 hours.

It localises to the nucleus. Its subcellular location is the cytoplasm. It is found in the cytosol. In terms of biological role, transcriptional repressor which may act as a negative-feedback regulator of CLOCK-BMAL1 transcriptional activity in the circadian-clock mechanism. May stimulate BMAL1-dependent phosphorylation of CLOCK. However, the physiological relevance of these observations is unsure, since experiments in knockout mice showed that CIPC is not critially required for basic circadian clock. This Mus musculus (Mouse) protein is CLOCK-interacting pacemaker (Cipc).